The sequence spans 263 residues: Palmitoyltransferase ZDHHC22 (263 aa).

At 1-9 the chain is on the cytoplasmic side; the sequence is MLALRLLNV. Residues 10-30 form a helical membrane-spanning segment; the sequence is VAPAYFLCISLVTFVLQLFLF. Topologically, residues 31 to 48 are lumenal; the sequence is LPSMREDPAAARLFSPAL. Residues 49–69 form a helical membrane-spanning segment; the sequence is LHGALFLFLSANALGNYVLVI. Topologically, residues 70-125 are cytoplasmic; sequence QNSPDDLGACQGASARKTPCPSPSTHFCRVCARVTLRHDHHCFFTGNCIGSRNMRN. Residues 92 to 131 form the DHHC domain; the sequence is PSTHFCRVCARVTLRHDHHCFFTGNCIGSRNMRNFVLFCL. Catalysis depends on Cys-111, which acts as the S-palmitoyl cysteine intermediate. 2 helical membrane-spanning segments follow: residues 126–146 and 147–167; these read FVLF…AGVA and YISA…TLLP. Residues 168–182 are Cytoplasmic-facing; it reads TSISQFFSGAVLGSE. The chain crosses the membrane as a helical span at residues 183–203; sequence MFVILMLYLWFAIGLACAGFC. Residues 204-263 lie on the Lumenal side of the membrane; the sequence is CHQLLLILRGQTRHQVRKGVAVRARPWRKNLQEVFGKRWLLGLLVPMFNVGSESSKQQDK.

The protein belongs to the DHHC palmitoyltransferase family. As to quaternary structure, interacts with CNN3. As to expression, widely expressed.

It is found in the endoplasmic reticulum membrane. The protein resides in the golgi apparatus membrane. The enzyme catalyses L-cysteinyl-[protein] + hexadecanoyl-CoA = S-hexadecanoyl-L-cysteinyl-[protein] + CoA. Its function is as follows. Palmitoyltransferase that could catalyze the addition of palmitate onto various protein substrates and be involved in a variety of cellular processes. Catalyzes the palmitoylation of KCNMA1, regulating localization of KCNMA1 to the plasma membrane. Might also mediate palmitoylation of CNN3. This chain is Palmitoyltransferase ZDHHC22, found in Homo sapiens (Human).